A 227-amino-acid polypeptide reads, in one-letter code: Small ribosomal subunit protein uS7 (227 aa).

Composition is skewed to acidic residues over residues 1 to 12 (MSESDTDPDIDD) and 20 to 31 (NDVDVAVDESES). The interval 1-43 (MSESDTDPDIDDDAHNNGDNDVDVAVDESESAETTTDTDTASA) is disordered. Residues 32–43 (AETTTDTDTASA) show a composition bias toward low complexity.

The protein belongs to the universal ribosomal protein uS7 family. As to quaternary structure, part of the 30S ribosomal subunit.

Functionally, one of the primary rRNA binding proteins, it binds directly to 16S rRNA where it nucleates assembly of the head domain of the 30S subunit. Is located at the subunit interface close to the decoding center. This is Small ribosomal subunit protein uS7 from Haloquadratum walsbyi (strain DSM 16790 / HBSQ001).